The primary structure comprises 363 residues: Aminomethyltransferase (363 aa).

The protein belongs to the GcvT family. In terms of assembly, the glycine cleavage system is composed of four proteins: P, T, L and H.

It catalyses the reaction N(6)-[(R)-S(8)-aminomethyldihydrolipoyl]-L-lysyl-[protein] + (6S)-5,6,7,8-tetrahydrofolate = N(6)-[(R)-dihydrolipoyl]-L-lysyl-[protein] + (6R)-5,10-methylene-5,6,7,8-tetrahydrofolate + NH4(+). Functionally, the glycine cleavage system catalyzes the degradation of glycine. This chain is Aminomethyltransferase, found in Staphylococcus aureus (strain MRSA252).